A 185-amino-acid polypeptide reads, in one-letter code: Elongation factor P (185 aa).

This sequence belongs to the elongation factor P family.

The protein localises to the cytoplasm. Its pathway is protein biosynthesis; polypeptide chain elongation. Its function is as follows. Involved in peptide bond synthesis. Stimulates efficient translation and peptide-bond synthesis on native or reconstituted 70S ribosomes in vitro. Probably functions indirectly by altering the affinity of the ribosome for aminoacyl-tRNA, thus increasing their reactivity as acceptors for peptidyl transferase. The sequence is that of Elongation factor P from Trichodesmium erythraeum (strain IMS101).